The primary structure comprises 310 residues: NADH-cytochrome b5 reductase 1 (310 aa).

The chain crosses the membrane as a helical span at residues 30–50; the sequence is WVPFAVALAAGFVAWKLSVGG. Residues 61–166 enclose the FAD-binding FR-type domain; the sequence is NEFQNFVLKE…RGPKGAMVYT (106 aa). FAD contacts are provided by residues 146 to 160 and 172 to 209; these read TTLKVGDTMKVRGPK and HIGMIAGGTGITPMLQIIKAIIRNRPRNGGNDTTQVDL.

Belongs to the flavoprotein pyridine nucleotide cytochrome reductase family. In terms of assembly, monomer. Component of the 2-(3-amino-3-carboxypropyl)histidine synthase complex composed of dph1, dph2, dph3 and a NADH-dependent reductase, predominantly cbr1. It depends on FAD as a cofactor.

Its subcellular location is the mitochondrion outer membrane. The catalysed reaction is 2 Fe(III)-[cytochrome b5] + NADH = 2 Fe(II)-[cytochrome b5] + NAD(+) + H(+). The enzyme catalyses 2 Fe(3+)-[Dph3] + NADH = 2 Fe(2+)-[Dph3] + NAD(+) + H(+). The protein operates within protein modification; peptidyl-diphthamide biosynthesis. NADH-dependent reductase for dph3 and cytochrome b5. Required for the first step of diphthamide biosynthesis, a post-translational modification of histidine which occurs in elongation factor 2. Dph1 and dph2 transfer a 3-amino-3-carboxypropyl (ACP) group from S-adenosyl-L-methionine (SAM) to a histidine residue, the reaction is assisted by a reduction system comprising dph3 and a NADH-dependent reductase, predominantly cbr1. By reducing dph3, also involved in the formation of the tRNA wobble base modification mcm5s 2U (5-methoxycarbonylmethyl-2-thiouridine), mediated by the elongator complex. The cytochrome b5/NADH cytochrome b5 reductase electron transfer system supports the catalytic activity of several sterol biosynthetic enzymes. In Emericella nidulans (strain FGSC A4 / ATCC 38163 / CBS 112.46 / NRRL 194 / M139) (Aspergillus nidulans), this protein is NADH-cytochrome b5 reductase 1 (cbr1).